The following is a 478-amino-acid chain: Ribosomal RNA small subunit methyltransferase F (478 aa).

S-adenosyl-L-methionine-binding positions include 121-127 (ASAPGSK), glutamate 145, aspartate 172, and aspartate 190. Cysteine 243 acts as the Nucleophile in catalysis.

This sequence belongs to the class I-like SAM-binding methyltransferase superfamily. RsmB/NOP family.

It localises to the cytoplasm. The enzyme catalyses cytidine(1407) in 16S rRNA + S-adenosyl-L-methionine = 5-methylcytidine(1407) in 16S rRNA + S-adenosyl-L-homocysteine + H(+). Specifically methylates the cytosine at position 1407 (m5C1407) of 16S rRNA. The protein is Ribosomal RNA small subunit methyltransferase F of Shewanella woodyi (strain ATCC 51908 / MS32).